The chain runs to 136 residues: Large ribosomal subunit protein uL16 (136 aa).

The protein belongs to the universal ribosomal protein uL16 family. As to quaternary structure, part of the 50S ribosomal subunit.

Functionally, binds 23S rRNA and is also seen to make contacts with the A and possibly P site tRNAs. The chain is Large ribosomal subunit protein uL16 from Sodalis glossinidius (strain morsitans).